The primary structure comprises 788 residues: Auxin response factor 4 (788 aa).

Over residues 1–19 (MEFDLNTEIAEVEEEENDD) the composition is skewed to acidic residues. The segment at 1–53 (MEFDLNTEIAEVEEEENDDVGVGVGGGTRIDKGRLGISPSSSSSCSSGSSSSS) is disordered. The span at 38 to 53 (SPSSSSSCSSGSSSSS) shows a compositional bias: low complexity. The segment at residues 177–279 (FCKTLTASDT…ELRLGIRRAA (103 aa)) is a DNA-binding region (TF-B3). The tract at residues 413 to 433 (LSIQSSPRPKRPWAGLLDTTP) is disordered. Positions 665-747 (RICTKVHKQG…VVWKIHLYTK (83 aa)) constitute a PB1 domain.

The protein belongs to the ARF family. In terms of assembly, homodimers and heterodimers. In terms of tissue distribution, expressed in the whole plant.

It localises to the nucleus. Its function is as follows. Auxin response factors (ARFs) are transcriptional factors that bind specifically to the DNA sequence 5'-TGTCTC-3' found in the auxin-responsive promoter elements (AuxREs). Could act as transcriptional activator or repressor. Formation of heterodimers with Aux/IAA proteins may alter their ability to modulate early auxin response genes expression. In Arabidopsis thaliana (Mouse-ear cress), this protein is Auxin response factor 4 (ARF4).